The primary structure comprises 159 residues: Ribosomal RNA large subunit methyltransferase H (159 aa).

S-adenosyl-L-methionine contacts are provided by residues Leu76, Gly108, and 127–132 (FSPMTF).

Belongs to the RNA methyltransferase RlmH family. In terms of assembly, homodimer.

It is found in the cytoplasm. It carries out the reaction pseudouridine(1915) in 23S rRNA + S-adenosyl-L-methionine = N(3)-methylpseudouridine(1915) in 23S rRNA + S-adenosyl-L-homocysteine + H(+). Specifically methylates the pseudouridine at position 1915 (m3Psi1915) in 23S rRNA. This chain is Ribosomal RNA large subunit methyltransferase H, found in Alkaliphilus oremlandii (strain OhILAs) (Clostridium oremlandii (strain OhILAs)).